The following is a 159-amino-acid chain: Large ribosomal subunit protein uL11 (159 aa).

Belongs to the universal ribosomal protein uL11 family. As to quaternary structure, part of the ribosomal stalk of the 50S ribosomal subunit. Interacts with L10 and the large rRNA to form the base of the stalk. L10 forms an elongated spine to which L12 dimers bind in a sequential fashion forming a multimeric L10(L12)X complex.

In terms of biological role, forms part of the ribosomal stalk which helps the ribosome interact with GTP-bound translation factors. The sequence is that of Large ribosomal subunit protein uL11 from Methanococcus maripaludis (strain C6 / ATCC BAA-1332).